A 237-amino-acid chain; its full sequence is tRNA (guanine-N(7)-)-methyltransferase (237 aa).

Positions 1–24 (MTAHKPGDPTTLNRLYGRSKGKPL) are disordered. The S-adenosyl-L-methionine site is built by glutamate 62, glutamate 87, aspartate 119, and aspartate 141. The active site involves aspartate 141. Substrate is bound by residues lysine 145, aspartate 177, and 216–219 (TRYE).

The protein belongs to the class I-like SAM-binding methyltransferase superfamily. TrmB family.

The enzyme catalyses guanosine(46) in tRNA + S-adenosyl-L-methionine = N(7)-methylguanosine(46) in tRNA + S-adenosyl-L-homocysteine. Its pathway is tRNA modification; N(7)-methylguanine-tRNA biosynthesis. Catalyzes the formation of N(7)-methylguanine at position 46 (m7G46) in tRNA. This is tRNA (guanine-N(7)-)-methyltransferase from Sphingopyxis alaskensis (strain DSM 13593 / LMG 18877 / RB2256) (Sphingomonas alaskensis).